Consider the following 651-residue polypeptide: Threonine--tRNA ligase (651 aa).

The 61-residue stretch at 1-61 (MIKITFPDNS…NDDATVKLLK (61 aa)) folds into the TGS domain. A catalytic region spans residues 242–541 (DHRKIGKEMD…LIEHTAGKFP (300 aa)). Zn(2+)-binding residues include cysteine 337, histidine 388, and histidine 518.

It belongs to the class-II aminoacyl-tRNA synthetase family. In terms of assembly, homodimer. Requires Zn(2+) as cofactor.

The protein localises to the cytoplasm. It catalyses the reaction tRNA(Thr) + L-threonine + ATP = L-threonyl-tRNA(Thr) + AMP + diphosphate + H(+). Catalyzes the attachment of threonine to tRNA(Thr) in a two-step reaction: L-threonine is first activated by ATP to form Thr-AMP and then transferred to the acceptor end of tRNA(Thr). Also edits incorrectly charged L-seryl-tRNA(Thr). The sequence is that of Threonine--tRNA ligase from Parabacteroides distasonis (strain ATCC 8503 / DSM 20701 / CIP 104284 / JCM 5825 / NCTC 11152).